Consider the following 160-residue polypeptide: UPF0260 protein GDI1595/Gdia_1801 (160 aa).

Belongs to the UPF0260 family.

The protein is UPF0260 protein GDI1595/Gdia_1801 of Gluconacetobacter diazotrophicus (strain ATCC 49037 / DSM 5601 / CCUG 37298 / CIP 103539 / LMG 7603 / PAl5).